Here is a 715-residue protein sequence, read N- to C-terminus: uncharacterized protein (715 aa).

Disordered stretches follow at residues 192-216 (ASSV…SVTA), 300-348 (NEEV…TSKR), 461-481 (ASSS…RSNE), and 580-630 (FTVS…KPPK). Over residues 202–213 (NNTSPYPPSNSS) the composition is skewed to low complexity. Polar residues-rich tracts occupy residues 301 to 326 (EEVS…NKND) and 472 to 481 (HLGTSLRSNE). Over residues 601–614 (TDSSPSDTISSSPT) the composition is skewed to low complexity.

This is an uncharacterized protein from Schizosaccharomyces pombe (strain 972 / ATCC 24843) (Fission yeast).